Consider the following 1066-residue polypeptide: Hemoglobin and hemoglobin-haptoglobin-binding protein C (1066 aa).

The signal sequence occupies residues 1–24; sequence MTNFKFTLLARSIAFALNASTAYA. 7 tandem repeats follow at residues 26–29, 30–33, 34–37, 38–41, 42–45, 46–49, and 50–53. A 7 X 4 AA tandem repeats of Q-P-T-N region spans residues 26–53; sequence QPTNQPTNQPTNQPTNQPTNQPTNQPTN. The segment covering 26-54 has biased composition (low complexity); the sequence is QPTNQPTNQPTNQPTNQPTNQPTNQPTNQ. The tract at residues 26 to 57 is disordered; the sequence is QPTNQPTNQPTNQPTNQPTNQPTNQPTNQDSN. The TonB box motif lies at 63 to 70; it reads EQINVSGS. The region spanning 66 to 200 is the TBDR plug domain; sequence NVSGSTETIN…LGGSVIFETK (135 aa). Residues 208–1066 form the TBDR beta-barrel domain; that stretch reads DKDYYVSYKR…NYRMSVQFEF (859 aa). The TonB C-terminal box signature appears at 1049–1066; that stretch reads NRLYAPGRNYRMSVQFEF.

The protein belongs to the TonB-dependent receptor family. Hemoglobin/haptoglobin binding protein subfamily.

It is found in the cell outer membrane. Functionally, acts as a receptor for hemoglobin or the hemoglobin/haptoglobin complex of the human host and is required for heme uptake. The sequence is that of Hemoglobin and hemoglobin-haptoglobin-binding protein C (hgpC) from Haemophilus influenzae.